A 98-amino-acid chain; its full sequence is Acylphosphatase (98 aa).

In terms of domain architecture, Acylphosphatase-like spans 12-98 (RLSAWVHGHV…DATMTGFSER (87 aa)). Catalysis depends on residues Arg-27 and Asn-45.

This sequence belongs to the acylphosphatase family.

The catalysed reaction is an acyl phosphate + H2O = a carboxylate + phosphate + H(+). This Mycolicibacterium smegmatis (strain ATCC 700084 / mc(2)155) (Mycobacterium smegmatis) protein is Acylphosphatase (acyP).